We begin with the raw amino-acid sequence, 1162 residues long: Nucleoporin nup132 (1162 aa).

It belongs to the nucleoporin Nup133 family. In terms of assembly, component of the npc107-120 complex which consists of nup85, nup107, nup120, nup131, nup132 and seh1. Interacts with nup107.

It is found in the nucleus envelope. Its function is as follows. Functions as a component of the nuclear pore complex (NPC). NPC components, collectively referred to as nucleoporins (NUPs), can play the role of both NPC structural components and of docking or interaction partners for transiently associated nuclear transport factors. Active directional transport is assured by both, a Phe-Gly (FG) repeat affinity gradient for these transport factors across the NPC and a transport cofactor concentration gradient across the nuclear envelope. This Schizosaccharomyces pombe (strain 972 / ATCC 24843) (Fission yeast) protein is Nucleoporin nup132 (nup132).